Consider the following 229-residue polypeptide: uncharacterized protein (229 aa).

Residues 2-229 (LTLNNISKSY…LDERGDISHA (228 aa)) enclose the ABC transporter domain. 38 to 45 (GPSGSGKS) contacts ATP.

Belongs to the ABC transporter superfamily.

This is an uncharacterized protein from Bacillus subtilis (strain 168).